A 661-amino-acid polypeptide reads, in one-letter code: Ubiquitin carboxyl-terminal hydrolase 51 (661 aa).

The tract at residues 1–144 (MRGTQGAQEM…SENSLLEVGS (144 aa)) is disordered. Over residues 21 to 30 (TSENLTSRGS) the composition is skewed to polar residues. Over residues 53 to 71 (PRRKPRPRPQPRSRSRGGR) the composition is skewed to basic residues. Pro residues predominate over residues 75–96 (APPPPPAKPPPPPPAPPPPPLP). The UBP-type zinc finger occupies 149-267 (TGCCHVESFK…KETKEKILGL (119 aa)). Zn(2+)-binding residues include Cys151, His153, Cys192, Cys195, Cys205, Cys208, Cys213, His218, His222, His228, Cys241, and Cys244. In terms of domain architecture, USP spans 320-656 (RGLINLGNTC…EGYLLFYHRQ (337 aa)). Cys329 serves as the catalytic Nucleophile. Residue His615 is the Proton acceptor of the active site.

The protein belongs to the peptidase C19 family. In terms of assembly, interacts with H2A.

It is found in the chromosome. It carries out the reaction Thiol-dependent hydrolysis of ester, thioester, amide, peptide and isopeptide bonds formed by the C-terminal Gly of ubiquitin (a 76-residue protein attached to proteins as an intracellular targeting signal).. Functionally, specifically deubiquitinates 'Lys-14' (H2AK13Ub) and 'Lys-16'(H2AK15Ub) of histone H2A regulating the DNA damage response at double-strand breaks (DSBs). USP51 is recruited to chromatin after DNA damage and regulates the dynamic assembly/disassembly of TP53BP1 and BRCA1. Functions in DNA double-strand break repair also by mediating the deubiquitination and subsequent stabilization of DGCR8, leading to the recruitment of DGCR8 binding partners to double strand breaks such as RNF168 or MDC1. In addition, promotes the deubiquitination and stabilization of the transcriptional repressor ZEB1. The chain is Ubiquitin carboxyl-terminal hydrolase 51 from Mus musculus (Mouse).